Reading from the N-terminus, the 331-residue chain is Sulfate/thiosulfate import ATP-binding protein CysA (331 aa).

The 231-residue stretch at 2–232 (ITVTNARKNY…PANEFVMSFL (231 aa)) folds into the ABC transporter domain. 34-41 (GPSGSGKS) lines the ATP pocket.

It belongs to the ABC transporter superfamily. Sulfate/tungstate importer (TC 3.A.1.6) family. As to quaternary structure, the complex is composed of two ATP-binding proteins (CysA), two transmembrane proteins (CysT and CysW) and a solute-binding protein (CysP).

It localises to the cell membrane. The enzyme catalyses sulfate(out) + ATP + H2O = sulfate(in) + ADP + phosphate + H(+). It catalyses the reaction thiosulfate(out) + ATP + H2O = thiosulfate(in) + ADP + phosphate + H(+). Part of the ABC transporter complex CysAWTP involved in sulfate/thiosulfate import. Responsible for energy coupling to the transport system. The sequence is that of Sulfate/thiosulfate import ATP-binding protein CysA from Nocardia farcinica (strain IFM 10152).